We begin with the raw amino-acid sequence, 301 residues long: Probable protein phosphatase 2C 4 (301 aa).

Over residues 1–18 (MGPYLSQPNKNKTTTSGE) the composition is skewed to polar residues. The tract at residues 1-20 (MGPYLSQPNKNKTTTSGEGK) is disordered. The 276-residue stretch at 23-298 (IFAASEMQGW…DNMTTLIIYL (276 aa)) folds into the PPM-type phosphatase domain. Residues Asp57, Gly58, Asp237, and Asp289 each coordinate Mn(2+).

It belongs to the PP2C family. The cofactor is Mg(2+). Requires Mn(2+) as cofactor.

The protein resides in the membrane. The enzyme catalyses O-phospho-L-seryl-[protein] + H2O = L-seryl-[protein] + phosphate. It carries out the reaction O-phospho-L-threonyl-[protein] + H2O = L-threonyl-[protein] + phosphate. Functionally, enzyme with a broad specificity. This is Probable protein phosphatase 2C 4 from Paramecium tetraurelia.